Reading from the N-terminus, the 514-residue chain is Peptide chain release factor 3 (514 aa).

The 261-residue stretch at 8 to 268 (KKRRTFAIIS…TFLKFAPEPH (261 aa)) folds into the tr-type G domain. GTP contacts are provided by residues 17–24 (SHPDAGKT), 85–89 (DTPGH), and 139–142 (NKLD).

It belongs to the TRAFAC class translation factor GTPase superfamily. Classic translation factor GTPase family. PrfC subfamily.

It is found in the cytoplasm. Increases the formation of ribosomal termination complexes and stimulates activities of RF-1 and RF-2. It binds guanine nucleotides and has strong preference for UGA stop codons. It may interact directly with the ribosome. The stimulation of RF-1 and RF-2 is significantly reduced by GTP and GDP, but not by GMP. In Streptococcus gordonii (strain Challis / ATCC 35105 / BCRC 15272 / CH1 / DL1 / V288), this protein is Peptide chain release factor 3.